The sequence spans 231 residues: Thermonuclease (231 aa).

The signal sequence occupies residues 1–26 (MLVMTEYLLSAGICMAIVSILLIGMA). 2 propeptides span residues 27–63 (ISNV…SANA) and 64–82 (SQTD…TVYS). Polar residues predominate over residues 61 to 73 (ANASQTDNGVNRS). Residues 61-86 (ANASQTDNGVNRSGSEDPTVYSATST) form a disordered region. Ca(2+) is bound at residue Asp-103. Arg-117 is an active-site residue. The Ca(2+) site is built by Asp-122 and Thr-123. Residues Glu-125 and Arg-169 contribute to the active site. Residues 203 to 219 (HEQHLRKSEAQAKKEKL) are compositionally biased toward basic and acidic residues. The disordered stretch occupies residues 203–231 (HEQHLRKSEAQAKKEKLNIWSEDNADSGQ).

It belongs to the thermonuclease family. Ca(2+) is required as a cofactor.

The protein localises to the secreted. Its subcellular location is the membrane. The enzyme catalyses Endonucleolytic cleavage to nucleoside 3'-phosphates and 3'-phosphooligonucleotide end-products.. Enzyme that catalyzes the hydrolysis of both DNA and RNA at the 5' position of the phosphodiester bond. This chain is Thermonuclease, found in Staphylococcus aureus.